The sequence spans 286 residues: MASGKEIKGKIGSIKNTQKITSAMEMVAASKMKKAQERMASGRPYAQNMLKVIGHIANGNLEYRHPYLEEREVKRVGYIVISTDRGLCGGLNTNEFKLVTQDVKKWREQGVEVDFAALGSKACSFFNRFGGKLLAAESGLGDKPSVSDVVGVVRVMLKAYDEGQIDRVFLVFNDFVNTMTQKPVINQLLPLPKSEDEEYQHRWDYIYEPDPKEILEALMVRYIESQVYQGVVENAASEQAARMVAMKAATDNAGNLIDELQLVYNKARQAAITQEISEIVSGAAAV.

The protein belongs to the ATPase gamma chain family. As to quaternary structure, F-type ATPases have 2 components, CF(1) - the catalytic core - and CF(0) - the membrane proton channel. CF(1) has five subunits: alpha(3), beta(3), gamma(1), delta(1), epsilon(1). CF(0) has three main subunits: a, b and c.

The protein localises to the cell inner membrane. Its function is as follows. Produces ATP from ADP in the presence of a proton gradient across the membrane. The gamma chain is believed to be important in regulating ATPase activity and the flow of protons through the CF(0) complex. This chain is ATP synthase gamma chain, found in Alteromonas mediterranea (strain DSM 17117 / CIP 110805 / LMG 28347 / Deep ecotype).